The primary structure comprises 213 residues: Octanoyltransferase (213 aa).

Residues Glu-32–Pro-207 form the BPL/LPL catalytic domain. Substrate-binding positions include Arg-71–His-78, Ser-138–Gly-140, and Gly-151–Ala-153. The active-site Acyl-thioester intermediate is the Cys-169.

It belongs to the LipB family.

It localises to the cytoplasm. The enzyme catalyses octanoyl-[ACP] + L-lysyl-[protein] = N(6)-octanoyl-L-lysyl-[protein] + holo-[ACP] + H(+). It participates in protein modification; protein lipoylation via endogenous pathway; protein N(6)-(lipoyl)lysine from octanoyl-[acyl-carrier-protein]: step 1/2. Its function is as follows. Catalyzes the transfer of endogenously produced octanoic acid from octanoyl-acyl-carrier-protein onto the lipoyl domains of lipoate-dependent enzymes. Lipoyl-ACP can also act as a substrate although octanoyl-ACP is likely to be the physiological substrate. The chain is Octanoyltransferase from Salmonella paratyphi A (strain ATCC 9150 / SARB42).